The chain runs to 490 residues: Aspartyl/glutamyl-tRNA(Asn/Gln) amidotransferase subunit B (490 aa).

Belongs to the GatB/GatE family. GatB subfamily. In terms of assembly, heterotrimer of A, B and C subunits.

It catalyses the reaction L-glutamyl-tRNA(Gln) + L-glutamine + ATP + H2O = L-glutaminyl-tRNA(Gln) + L-glutamate + ADP + phosphate + H(+). It carries out the reaction L-aspartyl-tRNA(Asn) + L-glutamine + ATP + H2O = L-asparaginyl-tRNA(Asn) + L-glutamate + ADP + phosphate + 2 H(+). In terms of biological role, allows the formation of correctly charged Asn-tRNA(Asn) or Gln-tRNA(Gln) through the transamidation of misacylated Asp-tRNA(Asn) or Glu-tRNA(Gln) in organisms which lack either or both of asparaginyl-tRNA or glutaminyl-tRNA synthetases. The reaction takes place in the presence of glutamine and ATP through an activated phospho-Asp-tRNA(Asn) or phospho-Glu-tRNA(Gln). This is Aspartyl/glutamyl-tRNA(Asn/Gln) amidotransferase subunit B from Burkholderia pseudomallei (strain 1106a).